Here is a 149-residue protein sequence, read N- to C-terminus: Ribonuclease VapC2 (149 aa).

Residues 11-149 (IFFDSNILIY…RVDFLEIIEI (139 aa)) enclose the PINc domain. Mg(2+)-binding residues include Asp14 and Asp116.

The protein belongs to the PINc/VapC protein family. Requires Mg(2+) as cofactor.

Its function is as follows. Toxic component of a type II toxin-antitoxin (TA) system. An RNase. Its cognate antitoxin is VapB2. This Methanocaldococcus jannaschii (strain ATCC 43067 / DSM 2661 / JAL-1 / JCM 10045 / NBRC 100440) (Methanococcus jannaschii) protein is Ribonuclease VapC2.